Reading from the N-terminus, the 212-residue chain is LexA repressor (212 aa).

Positions 29–49 (VREIGEAVGLSSSSTIHGHIE) form a DNA-binding region, H-T-H motif. Residues Ser133 and Lys171 each act as for autocatalytic cleavage activity in the active site.

Belongs to the peptidase S24 family. As to quaternary structure, homodimer.

It carries out the reaction Hydrolysis of Ala-|-Gly bond in repressor LexA.. Represses a number of genes involved in the response to DNA damage (SOS response), including recA and lexA. In the presence of single-stranded DNA, RecA interacts with LexA causing an autocatalytic cleavage which disrupts the DNA-binding part of LexA, leading to derepression of the SOS regulon and eventually DNA repair. This is LexA repressor from Leuconostoc mesenteroides subsp. mesenteroides (strain ATCC 8293 / DSM 20343 / BCRC 11652 / CCM 1803 / JCM 6124 / NCDO 523 / NBRC 100496 / NCIMB 8023 / NCTC 12954 / NRRL B-1118 / 37Y).